Here is a 344-residue protein sequence, read N- to C-terminus: Aspartate-semialdehyde dehydrogenase (344 aa).

NADP(+) contacts are provided by residues threonine 10–valine 13 and arginine 38–serine 39. Arginine 101 is a phosphate binding site. Cysteine 131 acts as the Acyl-thioester intermediate in catalysis. Substrate is bound at residue glutamine 158. Serine 161–glycine 162 contributes to the NADP(+) binding site. Residue lysine 228 coordinates phosphate. Arginine 250 is a substrate binding site. Histidine 257 functions as the Proton acceptor in the catalytic mechanism. Asparagine 326 serves as a coordination point for NADP(+).

It belongs to the aspartate-semialdehyde dehydrogenase family. In terms of assembly, homodimer.

The enzyme catalyses L-aspartate 4-semialdehyde + phosphate + NADP(+) = 4-phospho-L-aspartate + NADPH + H(+). The protein operates within amino-acid biosynthesis; L-lysine biosynthesis via DAP pathway; (S)-tetrahydrodipicolinate from L-aspartate: step 2/4. It functions in the pathway amino-acid biosynthesis; L-methionine biosynthesis via de novo pathway; L-homoserine from L-aspartate: step 2/3. Its pathway is amino-acid biosynthesis; L-threonine biosynthesis; L-threonine from L-aspartate: step 2/5. Its function is as follows. Catalyzes the NADPH-dependent formation of L-aspartate-semialdehyde (L-ASA) by the reductive dephosphorylation of L-aspartyl-4-phosphate. The sequence is that of Aspartate-semialdehyde dehydrogenase from Corynebacterium melassecola.